The chain runs to 288 residues: Syntaxin-1A (288 aa).

The segment covering 1–13 (MKDRTQELRTAKD) has biased composition (basic and acidic residues). Residues 1–20 (MKDRTQELRTAKDSDDDDDV) form a disordered region. Over 1 to 265 (MKDRTQELRT…KYQSKARRKK (265 aa)) the chain is Cytoplasmic. Ser-14, Ser-64, and Ser-95 each carry phosphoserine. Positions 68–109 (DEKTKEELEELMSDIKKTANKVRSKLKSIEQSIEQEEGLNRS) form a coiled coil. Ser-188 is subject to Phosphoserine; by DAPK1. The t-SNARE coiled-coil homology domain occupies 192–254 (LSEIETRHSE…ERAVSDTKKA (63 aa)). Residues Lys-252, Lys-253, and Lys-256 each participate in a glycyl lysine isopeptide (Lys-Gly) (interchain with G-Cter in SUMO) cross-link. A helical; Anchor for type IV membrane protein membrane pass occupies residues 266-288 (IMIVICCVVLGIVIASTFGGIFG).

It belongs to the syntaxin family. Part of the SNARE core complex containing SNAP25, VAMP2 and STX1A; this complex constitutes the basic catalytic machinery of the complex neurotransmitter release apparatus. The SNARE complex interacts with CPLX1. Interacts with STXBP1. The interaction with STXBP1 promotes assembly of the SNARE complex. Interacts (via C-terminus) with KCNB1 (via C-terminus); the interaction increases in a calcium-dependent manner and induces a pore-independent enhancement of exocytosis in neuroendocrine cells, chromaffin cells, pancreatic beta cells and from the soma of dorsal root ganglia (DRG) neurons. Interacts with SYTL4. Interacts with STXBP6. Interacts with PLCL1 (via C2 domain). Interacts with OTOF. Interacts with LGI3. Interacts (via the H3 domain) with SLC6A4 (via the N-terminus); this interaction regulates SLC4A6 channel conductance in thalamocortical neurons. Interacts with SYT6 and SYT8; the interaction is Ca(2+)-dependent. Interacts with VAMP8. Interacts with SNAP23. Interacts with VAPA and SYBU. Interacts with PRRT2. Interacts with SEPT8. Interacts with STXBP5L. Interacts with synaptotagmin-1/SYT1. Interacts with SEPTIN5; in the cerebellar cortex. Interacts with SEPTIN4; in the striatum. In terms of processing, phosphorylated by CK2. Phosphorylation at Ser-188 by DAPK1 significantly decreases its interaction with STXBP1. Post-translationally, sumoylated, sumoylation is required for regulation of synaptic vesicle endocytosis. (Microbial infection) Targeted and hydrolyzed by C.botulinum neurotoxin type C (BoNT/C) which inhibits neurotransmitter release. Probably hydrolyzes the 253-Lys-|-Ala-254 bond.

The protein localises to the cytoplasmic vesicle. The protein resides in the secretory vesicle. Its subcellular location is the synaptic vesicle membrane. It localises to the synapse. It is found in the synaptosome. The protein localises to the cell membrane. Plays an essential role in hormone and neurotransmitter calcium-dependent exocytosis and endocytosis. Part of the SNARE (Soluble NSF Attachment Receptor) complex composed of SNAP25, STX1A and VAMP2 which mediates the fusion of synaptic vesicles with the presynaptic plasma membrane. STX1A and SNAP25 are localized on the plasma membrane while VAMP2 resides in synaptic vesicles. The pairing of the three SNAREs from the N-terminal SNARE motifs to the C-terminal anchors leads to the formation of the SNARE complex, which brings membranes into close proximity and results in final fusion. Participates in the calcium-dependent regulation of acrosomal exocytosis in sperm. Also plays an important role in the exocytosis of hormones such as insulin or glucagon-like peptide 1 (GLP-1). This is Syntaxin-1A (STX1A) from Bos taurus (Bovine).